The sequence spans 167 residues: Phospholipase A and acyltransferase 1 (167 aa).

Residues 1–138 (MAVNDCFSLT…GEGVSEQANR (138 aa)) are Cytoplasmic-facing. In terms of domain architecture, LRAT spans 20-135 (LIEVFRPCYQ…LRYGEGVSEQ (116 aa)). Residue His30 is part of the active site. The active-site Acyl-thioester intermediate is Cys119. The helical transmembrane segment at 139–159 (AIGTIGLVAAGIDIFTFLGLF) threads the bilayer. The Lumenal portion of the chain corresponds to 160-167 (PKRQRTKY).

This sequence belongs to the H-rev107 family. Expressed in skeletal muscle, heart, brain, bone marrow and testis. As to expression, abundantly expressed in brain, heart, and skeletal muscle.

It localises to the membrane. Its subcellular location is the cytoplasm. The protein resides in the nucleus. It carries out the reaction a 1,2-diacyl-sn-glycero-3-phosphocholine + H2O = a 1-acyl-sn-glycero-3-phosphocholine + a fatty acid + H(+). It catalyses the reaction a 1,2-diacyl-sn-glycero-3-phosphocholine + H2O = a 2-acyl-sn-glycero-3-phosphocholine + a fatty acid + H(+). The catalysed reaction is 1,2-dihexadecanoyl-sn-glycero-3-phosphocholine + H2O = 2-hexadecanoyl-sn-glycero-3-phosphocholine + hexadecanoate + H(+). The enzyme catalyses 1,2-dihexadecanoyl-sn-glycero-3-phosphocholine + H2O = 1-hexadecanoyl-sn-glycero-3-phosphocholine + hexadecanoate + H(+). It carries out the reaction 1-hexadecanoyl-2-(5Z,8Z,11Z,14Z-eicosatetraenoyl)-sn-glycero-3-phosphoethanolamine + H2O = 2-(5Z,8Z,11Z,14Z)-eicosatetraenoyl-sn-glycero-3-phosphoethanolamine + hexadecanoate + H(+). It catalyses the reaction 1-hexadecanoyl-2-(5Z,8Z,11Z,14Z-eicosatetraenoyl)-sn-glycero-3-phosphoethanolamine + H2O = 1-hexadecanoyl-sn-glycero-3-phosphoethanolamine + (5Z,8Z,11Z,14Z)-eicosatetraenoate + H(+). The catalysed reaction is 1,2-di-(9Z-octadecenoyl)-sn-glycero-3-phosphoethanolamine + 1,2-dihexadecanoyl-sn-glycero-3-phosphocholine = hexadecanoyl-sn-glycero-3-phosphocholine + N-hexadecanoyl-1,2-di-(9Z-octadecenoyl)-sn-glycero-3-phosphoethanolamine + H(+). The enzyme catalyses 1,2-dihexadecanoyl-sn-glycero-3-phosphocholine + a 2-acyl-sn-glycero-3-phosphocholine = a 1-hexadecanoyl-2-acyl-sn-glycero-3-phosphocholine + 2-hexadecanoyl-sn-glycero-3-phosphocholine. Exhibits both phospholipase A1/2 and acyltransferase activities. Shows phospholipase A1 (PLA1) and A2 (PLA2) activity, catalyzing the calcium-independent release of fatty acids from the sn-1 or sn-2 position of glycerophospholipids. Shows O-acyltransferase activity, catalyzing the transfer of a fatty acyl group from glycerophospholipid to the hydroxyl group of lysophospholipid. Shows N-acyltransferase activity, catalyzing the calcium-independent transfer of a fatty acyl group at the sn-1 position of phosphatidylcholine (PC) and other glycerophospholipids to the primary amine of phosphatidylethanolamine (PE), forming N-acylphosphatidylethanolamine (NAPE), which serves as precursor for N-acylethanolamines (NAEs). This Mus musculus (Mouse) protein is Phospholipase A and acyltransferase 1.